The sequence spans 859 residues: Probable potassium transporter 14 (859 aa).

Residues 1–19 (METRSGGSGSASGGGGGGR) are compositionally biased toward gly residues. Residues 1–69 (METRSGGSGS…SRGGCSDSDD (69 aa)) form a disordered region. The Cytoplasmic segment spans residues 1–112 (METRSGGSGS…RHQEITVGRS (112 aa)). Over residues 54 to 65 (PAAASGSRGGCS) the composition is skewed to low complexity. Residues 113 to 133 (IVLAVQTLGVVFGDVGTSPLY) form a helical membrane-spanning segment. The Extracellular segment spans residues 134–155 (AFDVMFNKYPITSKEDVLGALS). Residues 156-176 (LVIYTLILIPLLKYTLIALWG) form a helical membrane-spanning segment. Residues 177–240 (NDDGEGGTFA…RLETSSMLKK (64 aa)) are Cytoplasmic-facing. Residues 241 to 261 (LLLMLVLFGTSMVIADGVVTP) form a helical membrane-spanning segment. The Extracellular portion of the chain corresponds to 262-275 (AMSVMSAVNGLKVG). A helical membrane pass occupies residues 276 to 296 (ISSVNEGEVVMITVAVLIVLF). The Cytoplasmic segment spans residues 297–305 (TLQRFGSSK). Residues 306-326 (VALAVGPALFIWFCCLAGIGI) form a helical membrane-spanning segment. Residues 327–359 (YNMKTYGSAVLQAFNPMYIYYYFERNPTQAWMS) lie on the Extracellular side of the membrane. A helical membrane pass occupies residues 360-380 (LGGCLLCATGSEAMFADLCYF). Residues 381-388 (SVKSVQLT) lie on the Cytoplasmic side of the membrane. A helical membrane pass occupies residues 389–409 (FVFLVLPCLLLGYLGQAAFLM). Residues 410 to 417 (ENLTENQQ) are Extracellular-facing. Residue Asn-411 is glycosylated (N-linked (GlcNAc...) asparagine). The chain crosses the membrane as a helical span at residues 418 to 438 (VFFLSIPNQAFWPVVFIAILA). At 439–478 (AIIASRTMTTAIFSTIKQATALGCFPRLKIIHTSRSFMGQ) the chain is on the cytoplasmic side. A helical transmembrane segment spans residues 479–499 (IYIPMMNWFLLVSCLAFVTMF). The Extracellular segment spans residues 500–508 (GSINEIGNA). Residues 509 to 531 (YGIAELGVMMMTTVLVTIIMLLI) form a helical membrane-spanning segment. At 532–535 (WQIN) the chain is on the cytoplasmic side. Residues 536–558 (IIVVLCFLTLSLGLELIFFSSVL) form a helical membrane-spanning segment. Residues 559 to 560 (GS) lie on the Extracellular side of the membrane. The chain crosses the membrane as a helical span at residues 561–581 (VADGSWVLLVFAAVLYLIMYI). Topologically, residues 582–859 (WNYGTKLKYE…MMQVAMQYMV (278 aa)) are cytoplasmic. Residues 752-772 (GVPPAEAAGTTEHPTIGSSMS) are disordered. Residues 763–772 (EHPTIGSSMS) show a composition bias toward polar residues.

Belongs to the HAK/KUP transporter (TC 2.A.72.3) family.

Its subcellular location is the membrane. High-affinity potassium transporter. This is Probable potassium transporter 14 (HAK14) from Oryza sativa subsp. japonica (Rice).